A 539-amino-acid chain; its full sequence is T-complex protein 1 subunit zeta (539 aa).

The protein belongs to the TCP-1 chaperonin family. In terms of assembly, heterooligomeric complex of about 850 to 900 kDa that forms two stacked rings, 12 to 16 nm in diameter.

It localises to the cytoplasm. Its function is as follows. Molecular chaperone; assists the folding of proteins upon ATP hydrolysis. Known to play a role, in vitro, in the folding of actin and tubulin. The polypeptide is T-complex protein 1 subunit zeta (cct-6) (Caenorhabditis elegans).